The following is a 176-amino-acid chain: ATP-dependent protease subunit HslV (176 aa).

Thr2 is a catalytic residue. The Na(+) site is built by Gly157, Cys160, and Thr163.

The protein belongs to the peptidase T1B family. HslV subfamily. In terms of assembly, a double ring-shaped homohexamer of HslV is capped on each side by a ring-shaped HslU homohexamer. The assembly of the HslU/HslV complex is dependent on binding of ATP.

It localises to the cytoplasm. The catalysed reaction is ATP-dependent cleavage of peptide bonds with broad specificity.. Allosterically activated by HslU binding. In terms of biological role, protease subunit of a proteasome-like degradation complex believed to be a general protein degrading machinery. This is ATP-dependent protease subunit HslV from Pseudomonas syringae pv. tomato (strain ATCC BAA-871 / DC3000).